A 238-amino-acid chain; its full sequence is tRNA (guanine-N(7)-)-methyltransferase (238 aa).

S-adenosyl-L-methionine contacts are provided by glutamate 68, glutamate 93, aspartate 120, and aspartate 143. The active site involves aspartate 143. Residues lysine 147, aspartate 179, and 216-219 each bind substrate; that span reads TKFE.

It belongs to the class I-like SAM-binding methyltransferase superfamily. TrmB family.

It catalyses the reaction guanosine(46) in tRNA + S-adenosyl-L-methionine = N(7)-methylguanosine(46) in tRNA + S-adenosyl-L-homocysteine. Its pathway is tRNA modification; N(7)-methylguanine-tRNA biosynthesis. Catalyzes the formation of N(7)-methylguanine at position 46 (m7G46) in tRNA. In Shewanella oneidensis (strain ATCC 700550 / JCM 31522 / CIP 106686 / LMG 19005 / NCIMB 14063 / MR-1), this protein is tRNA (guanine-N(7)-)-methyltransferase.